The sequence spans 822 residues: Probable alpha,alpha-trehalose-phosphate synthase [UDP-forming] 2 (822 aa).

Residues P12–G479 form a glycosyltransferase region.

It in the N-terminal section; belongs to the glycosyltransferase 20 family. In the C-terminal section; belongs to the trehalose phosphatase family.

It catalyses the reaction D-glucose 6-phosphate + UDP-alpha-D-glucose = alpha,alpha-trehalose 6-phosphate + UDP + H(+). The sequence is that of Probable alpha,alpha-trehalose-phosphate synthase [UDP-forming] 2 (TPS2) from Arabidopsis thaliana (Mouse-ear cress).